We begin with the raw amino-acid sequence, 235 residues long: Probable transcriptional regulatory protein Cj1172c (235 aa).

The protein belongs to the TACO1 family.

The protein resides in the cytoplasm. This Campylobacter jejuni subsp. jejuni serotype O:2 (strain ATCC 700819 / NCTC 11168) protein is Probable transcriptional regulatory protein Cj1172c.